A 60-amino-acid polypeptide reads, in one-letter code: Large ribosomal subunit protein bL32c (60 aa).

It belongs to the bacterial ribosomal protein bL32 family.

The protein localises to the plastid. The protein resides in the chloroplast. This is Large ribosomal subunit protein bL32c from Psilotum nudum (Whisk fern).